Reading from the N-terminus, the 43-residue chain is uncharacterized protein (43 aa).

The segment at 1–43 (MFKSRIETGGFQFQVHGDDESAMDDEFIDDDDDQQVVEPVTDN) is disordered. The segment covering 20 to 35 (ESAMDDEFIDDDDDQQ) has biased composition (acidic residues).

This is an uncharacterized protein from Dictyostelium discoideum (Social amoeba).